Consider the following 1359-residue polypeptide: NPC1-like intracellular cholesterol transporter 1 (1359 aa).

Residues 1-21 (MAEAGLRGWLLWALLLRLAQS) form the signal peptide. The Extracellular segment spans residues 22–284 (EPYTTIHQPG…TFYLGQMPGS (263 aa)). Intrachain disulfides connect Cys-33/Cys-90, Cys-39/Cys-57, Cys-78/Cys-125, Cys-91/Cys-129, Cys-113/Cys-254, Cys-116/Cys-172, Cys-189/Cys-197, Cys-243/Cys-259, and Cys-256/Cys-263. Asn-54 carries an N-linked (GlcNAc...) asparagine glycan. 2 N-linked (GlcNAc...) asparagine glycosylation sites follow: Asn-132 and Asn-138. The N-linked (GlcNAc...) asparagine glycan is linked to Asn-244. Residues 285-305 (LVLIIILCSVFAVVTILLVGF) traverse the membrane as a helical segment. Topologically, residues 306–351 (RVAPARDKSKMVDPKKGTSLSDKLSFSTHTLLGQFFQGWGTWVASW) are cytoplasmic. The chain crosses the membrane as a helical span at residues 352–372 (PLTILVLSVIPVVALAAGLVF). Residues 373 to 632 (TELTTDPVEL…DEINRTTAED (260 aa)) lie on the Extracellular side of the membrane. 6 N-linked (GlcNAc...) asparagine glycosylation sites follow: Asn-416, Asn-431, Asn-464, Asn-479, Asn-497, and Asn-506. Cys-471 and Cys-485 form a disulfide bridge. A disulfide bridge connects residues Cys-525 and Cys-542. Asn-626 carries an N-linked (GlcNAc...) asparagine glycan. An SSD domain is found at 632-797 (DLPIFATSYI…MSAFVALLSL (166 aa)). The chain crosses the membrane as a helical span at residues 633-653 (LPIFATSYIVIFLYISLALGS). Residues 654–666 (YSSWSRVMVDSKA) lie on the Cytoplasmic side of the membrane. The helical transmembrane segment at 667–687 (TLGLGGVAVVLGAVMAAMGFF) threads the bilayer. Residues 688–696 (SYLGIRSSL) lie on the Extracellular side of the membrane. Residues 697 to 717 (VILQVVPFLVLSVGADNIFIF) form a helical membrane-spanning segment. The Cytoplasmic portion of the chain corresponds to 718 to 742 (VLEYQRLPRRPGEPREVHIGRALGR). The chain crosses the membrane as a helical span at residues 743–763 (VAPSMLLCSLSEAICFFLGAL). At 764–776 (TPMPAVRTFALTS) the chain is on the extracellular side. A helical membrane pass occupies residues 777–797 (GLAVILDFLLQMSAFVALLSL). Over 798–846 (DSKRQEASRLDVCCCVKPQELPPPGQGEGLLLGFFQKAYAPFLLHWITR) the chain is Cytoplasmic. Residues 847–867 (GVVLLLFLALFGVSLYSMCHI) traverse the membrane as a helical segment. Topologically, residues 868–1139 (SVGLDQELAL…EQYLTILPEG (272 aa)) are extracellular. Intrachain disulfides connect Cys-920/Cys-925, Cys-966/Cys-1024, and Cys-980/Cys-989. The chain crosses the membrane as a helical span at residues 1140-1160 (LFMLSLCLVPTFAVSCLLLGL). At 1161–1168 (DLRSGLLN) the chain is on the cytoplasmic side. Residues 1169-1189 (LLSIVMILVDTVGFMALWGIS) form a helical membrane-spanning segment. Residues 1190 to 1191 (YN) lie on the Extracellular side of the membrane. A helical membrane pass occupies residues 1192–1212 (AVSLINLVSAVGMSVEFVSHI). Residues 1213–1236 (TRSFAISTKPTWLERAKEATISMG) lie on the Cytoplasmic side of the membrane. A helical transmembrane segment spans residues 1237-1257 (SAVFAGVAMTNLPGILVLGLA). Topologically, residues 1258 to 1268 (KAQLIQIFFFR) are extracellular. Residues 1269-1289 (LNLLITLLGLLHGLVFLPVIL) form a helical membrane-spanning segment. The Cytoplasmic portion of the chain corresponds to 1290 to 1359 (SYVGPDVNPA…NFLPNNGRQF (70 aa)).

This sequence belongs to the patched family. In terms of assembly, interacts with RAB11A, MYO5B and RAB11FIP2. Interaction with RAB11A, MYO5B and RAB11FIP2 is required for proper transport to the plasma membrane upon cholesterol depletion. Interacts with NPC2. Interacts with LIMA1. Post-translationally, highly glycosylated. Widely expressed. Expressed in liver. Also expressed in small intestine, pancreas, kidney, lung, pancreas, spleen, heart, gall bladder, brain, testis, stomach and muscle.

Its subcellular location is the apical cell membrane. The protein resides in the cell membrane. It is found in the cytoplasmic vesicle membrane. It catalyses the reaction cholesterol(in) = cholesterol(out). The enzyme catalyses sitosterol(out) = sitosterol(in). Its function is as follows. Plays a major role in cholesterol homeostasis. Critical for the uptake of cholesterol across the plasma membrane of the intestinal enterocyte. Involved in plant sterol absorption, it transports sitosterol, although at lower rates than cholesterol. Is the direct molecular target of ezetimibe, a drug that inhibits cholesterol absorption and is approved for the treatment of hypercholesterolemia. May have a function in the transport of multiple lipids and their homeostasis, thereby influencing lipid metabolism regulation. May be involved in caveolin trafficking from the plasma membrane. In addition, acts as a negative regulator of NPC2 and down-regulates its expression and secretion by inhibiting its maturation and accelerating its degradation. This is NPC1-like intracellular cholesterol transporter 1 from Homo sapiens (Human).